The following is a 391-amino-acid chain: Dual-specificity RNA methyltransferase RlmN (391 aa).

Glu-112 serves as the catalytic Proton acceptor. Positions 118 to 368 (ESDRGTLCIS…VRTPRGRDIL (251 aa)) constitute a Radical SAM core domain. A disulfide bond links Cys-125 and Cys-371. Residues Cys-132, Cys-136, and Cys-139 each coordinate [4Fe-4S] cluster. Residues 197–198 (GE), Ser-229, 251–253 (SLH), and Asn-328 each bind S-adenosyl-L-methionine. Cys-371 serves as the catalytic S-methylcysteine intermediate.

The protein belongs to the radical SAM superfamily. RlmN family. [4Fe-4S] cluster serves as cofactor.

It localises to the cytoplasm. It carries out the reaction adenosine(2503) in 23S rRNA + 2 reduced [2Fe-2S]-[ferredoxin] + 2 S-adenosyl-L-methionine = 2-methyladenosine(2503) in 23S rRNA + 5'-deoxyadenosine + L-methionine + 2 oxidized [2Fe-2S]-[ferredoxin] + S-adenosyl-L-homocysteine. It catalyses the reaction adenosine(37) in tRNA + 2 reduced [2Fe-2S]-[ferredoxin] + 2 S-adenosyl-L-methionine = 2-methyladenosine(37) in tRNA + 5'-deoxyadenosine + L-methionine + 2 oxidized [2Fe-2S]-[ferredoxin] + S-adenosyl-L-homocysteine. In terms of biological role, specifically methylates position 2 of adenine 2503 in 23S rRNA and position 2 of adenine 37 in tRNAs. m2A2503 modification seems to play a crucial role in the proofreading step occurring at the peptidyl transferase center and thus would serve to optimize ribosomal fidelity. In Beijerinckia indica subsp. indica (strain ATCC 9039 / DSM 1715 / NCIMB 8712), this protein is Dual-specificity RNA methyltransferase RlmN.